The following is an 86-amino-acid chain: MIOREX complex component 7 (86 aa).

As to quaternary structure, associates with the mitochondrial ribosome.

The protein resides in the mitochondrion. In terms of biological role, component of MIOREX complexes, large expressome-like assemblies of ribosomes with factors involved in all the steps of post-transcriptional gene expression. The polypeptide is MIOREX complex component 7 (Saccharomyces cerevisiae (strain ATCC 204508 / S288c) (Baker's yeast)).